The sequence spans 342 residues: Ferredoxin--NADP reductase (342 aa).

Positions 17, 36, 44, 49, 89, 124, 289, and 330 each coordinate FAD.

This sequence belongs to the ferredoxin--NADP reductase type 2 family. In terms of assembly, homodimer. FAD serves as cofactor.

The enzyme catalyses 2 reduced [2Fe-2S]-[ferredoxin] + NADP(+) + H(+) = 2 oxidized [2Fe-2S]-[ferredoxin] + NADPH. This is Ferredoxin--NADP reductase from Rhodopseudomonas palustris (strain BisB18).